The chain runs to 185 residues: Ribosome-recycling factor (185 aa).

This sequence belongs to the RRF family.

The protein resides in the cytoplasm. Its function is as follows. Responsible for the release of ribosomes from messenger RNA at the termination of protein biosynthesis. May increase the efficiency of translation by recycling ribosomes from one round of translation to another. The chain is Ribosome-recycling factor from Campylobacter jejuni (strain RM1221).